A 1193-amino-acid polypeptide reads, in one-letter code: Structural maintenance of chromosomes protein 3 homolog (1193 aa).

31-38 (GFNGSGKS) is a binding site for ATP. The residue at position 101 (K101) is an N6-acetyllysine. Coiled coils occupy residues 179 to 286 (SKKV…LNKT) and 332 to 483 (ILRV…EIIK). Residues 505-631 (ENILGFLIDN…VKSLESCENY (127 aa)) form the SMC hinge domain. A coiled-coil region spans residues 665–993 (TVYNKLKELK…SHKNIKDMIQ (329 aa)).

It belongs to the SMC family. SMC3 subfamily. In terms of assembly, component of the cohesin complex. Acetylation at Lys-101 by ESCO1 is important for genome stability and S phase sister chromatid cohesion.

The protein resides in the nucleus. Functionally, central component of cohesin, a complex required for chromosome cohesion during the cell cycle. The cohesin complex may form a large proteinaceous ring within which sister chromatids can be trapped. At anaphase, the complex is cleaved and dissociates from chromatin, allowing sister chromatids to segregate. Cohesion is coupled to DNA replication and is involved in DNA repair. The cohesin complex also plays an important role in spindle pole assembly during mitosis and in chromosomes movement. The chain is Structural maintenance of chromosomes protein 3 homolog from Plasmodium falciparum (isolate 3D7).